The following is a 180-amino-acid chain: GTP cyclohydrolase 1 (180 aa).

Positions 71, 74, and 142 each coordinate Zn(2+).

This sequence belongs to the GTP cyclohydrolase I family. As to quaternary structure, homomer.

The catalysed reaction is GTP + H2O = 7,8-dihydroneopterin 3'-triphosphate + formate + H(+). The protein operates within cofactor biosynthesis; 7,8-dihydroneopterin triphosphate biosynthesis; 7,8-dihydroneopterin triphosphate from GTP: step 1/1. In Helicobacter pylori (strain G27), this protein is GTP cyclohydrolase 1.